Here is a 364-residue protein sequence, read N- to C-terminus: Probable 7-methylxanthine methyltransferase 5 (364 aa).

Tyr19 contacts S-adenosyl-L-homocysteine. Residue Thr26 participates in theobromine binding. The S-adenosyl-L-homocysteine site is built by Cys64, Gln69, Asp101, Leu102, Ser134, and Phe135. Residues Tyr152, His155, and Trp156 each coordinate theobromine. The Mg(2+) site is built by Asn172, Asp258, Phe260, and Asn261. Phe314 contacts theobromine.

The protein belongs to the methyltransferase superfamily. Type-7 methyltransferase family. Mg(2+) is required as a cofactor.

The catalysed reaction is 7-methylxanthine + S-adenosyl-L-methionine = theobromine + S-adenosyl-L-homocysteine + H(+). It participates in alkaloid biosynthesis. Its function is as follows. Involved in the biosynthesis of theobromine. This is Probable 7-methylxanthine methyltransferase 5 from Theobroma cacao (Cacao).